Reading from the N-terminus, the 330-residue chain is Protoheme IX farnesyltransferase (330 aa).

Transmembrane regions (helical) follow at residues 30–50, 58–78, 106–126, 127–147, 155–175, 182–202, 228–248, 249–269, and 281–301; these read LVKPKIIALLLMTTAGAMWMA, FFITLLGGGIAAAAANVINMV, LIFSGILALAAFGLLAIFTNL, LAAGLAMSGILVYVGVYTHWL, IVIGGAAGAIPPLVGWAATTG, WVMFAIIFLWTPPHFWALAIL, ILLYALLMVPVSLLLVYPLGM, LGSFYLSAAALLGSLLVWKAV, and AASLFTFANLYLLLLCGAMGL.

Belongs to the UbiA prenyltransferase family. Protoheme IX farnesyltransferase subfamily.

Its subcellular location is the cell inner membrane. The enzyme catalyses heme b + (2E,6E)-farnesyl diphosphate + H2O = Fe(II)-heme o + diphosphate. Its pathway is porphyrin-containing compound metabolism; heme O biosynthesis; heme O from protoheme: step 1/1. Converts heme B (protoheme IX) to heme O by substitution of the vinyl group on carbon 2 of heme B porphyrin ring with a hydroxyethyl farnesyl side group. In Synechococcus sp. (strain JA-2-3B'a(2-13)) (Cyanobacteria bacterium Yellowstone B-Prime), this protein is Protoheme IX farnesyltransferase.